Consider the following 689-residue polypeptide: Elongation factor G (689 aa).

The tr-type G domain occupies 8-282 (LNTRNIGIMA…AVVDYLPSPI (275 aa)). GTP is bound by residues 17-24 (AHIDAGKT), 81-85 (DTPGH), and 135-138 (NKMD).

Belongs to the TRAFAC class translation factor GTPase superfamily. Classic translation factor GTPase family. EF-G/EF-2 subfamily.

Its subcellular location is the cytoplasm. Catalyzes the GTP-dependent ribosomal translocation step during translation elongation. During this step, the ribosome changes from the pre-translocational (PRE) to the post-translocational (POST) state as the newly formed A-site-bound peptidyl-tRNA and P-site-bound deacylated tRNA move to the P and E sites, respectively. Catalyzes the coordinated movement of the two tRNA molecules, the mRNA and conformational changes in the ribosome. The chain is Elongation factor G from Mycoplasma capricolum subsp. capricolum (strain California kid / ATCC 27343 / NCTC 10154).